Here is a 377-residue protein sequence, read N- to C-terminus: Alanine racemase (377 aa).

The active-site Proton acceptor; specific for D-alanine is the K35. Residue K35 is modified to N6-(pyridoxal phosphate)lysine. R130 contacts substrate. Y260 functions as the Proton acceptor; specific for L-alanine in the catalytic mechanism. M312 lines the substrate pocket.

Belongs to the alanine racemase family. Pyridoxal 5'-phosphate is required as a cofactor.

The enzyme catalyses L-alanine = D-alanine. The protein operates within amino-acid biosynthesis; D-alanine biosynthesis; D-alanine from L-alanine: step 1/1. In terms of biological role, catalyzes the interconversion of L-alanine and D-alanine. May also act on other amino acids. This is Alanine racemase (alr) from Leptothrix cholodnii (strain ATCC 51168 / LMG 8142 / SP-6) (Leptothrix discophora (strain SP-6)).